The chain runs to 260 residues: Methylthioribulose-1-phosphate dehydratase (260 aa).

The tract at residues 1 to 26 (MTPPTTGLPAENTTDDNDHLVQSDDP) is disordered. The span at 16–26 (DNDHLVQSDDP) shows a compositional bias: basic and acidic residues. C109 lines the substrate pocket. Residues H127 and H129 each contribute to the Zn(2+) site. The active-site Proton donor/acceptor is E154. H211 is a binding site for Zn(2+).

This sequence belongs to the aldolase class II family. MtnB subfamily. Zn(2+) serves as cofactor.

It localises to the cytoplasm. It catalyses the reaction 5-(methylsulfanyl)-D-ribulose 1-phosphate = 5-methylsulfanyl-2,3-dioxopentyl phosphate + H2O. It functions in the pathway amino-acid biosynthesis; L-methionine biosynthesis via salvage pathway; L-methionine from S-methyl-5-thio-alpha-D-ribose 1-phosphate: step 2/6. Its function is as follows. Catalyzes the dehydration of methylthioribulose-1-phosphate (MTRu-1-P) into 2,3-diketo-5-methylthiopentyl-1-phosphate (DK-MTP-1-P). This chain is Methylthioribulose-1-phosphate dehydratase, found in Podospora anserina (strain S / ATCC MYA-4624 / DSM 980 / FGSC 10383) (Pleurage anserina).